A 539-amino-acid polypeptide reads, in one-letter code: Chaperonin GroEL 2 (539 aa).

Residues 30 to 33, lysine 51, 87 to 91, glycine 415, 480 to 482, and aspartate 496 contribute to the ATP site; these read TLGP, DGTTT, and NAA.

This sequence belongs to the chaperonin (HSP60) family. In terms of assembly, forms a cylinder of 14 subunits composed of two heptameric rings stacked back-to-back. Interacts with the co-chaperonin GroES.

Its subcellular location is the cytoplasm. The enzyme catalyses ATP + H2O + a folded polypeptide = ADP + phosphate + an unfolded polypeptide.. Together with its co-chaperonin GroES, plays an essential role in assisting protein folding. The GroEL-GroES system forms a nano-cage that allows encapsulation of the non-native substrate proteins and provides a physical environment optimized to promote and accelerate protein folding. In Sphingopyxis alaskensis (strain DSM 13593 / LMG 18877 / RB2256) (Sphingomonas alaskensis), this protein is Chaperonin GroEL 2.